Here is a 139-residue protein sequence, read N- to C-terminus: MSESYQKLRKDFKELDFTDRLTFLAESLLLTGQSAIVGGLEVAGRVVETVTGTVGSLIDASGITNILGGSGGVVGETIDRVAITVKDVSRSAGELYNDAVRNVENATSNAAKAVGDVGVSASEAVKNIAGSFQKTTGNK.

The protein resides in the chlorosome. The chain is Chlorosome protein C (csmC) from Chlorobaculum tepidum (strain ATCC 49652 / DSM 12025 / NBRC 103806 / TLS) (Chlorobium tepidum).